The primary structure comprises 400 residues: WW domain-containing transcription regulator protein 1 (400 aa).

A Glycyl lysine isopeptide (Lys-Gly) (interchain with G-Cter in ubiquitin) cross-link involves residue K46. The disordered stretch occupies residues 52–117 (FFKEPDSGSH…QQHAHLRQQS (66 aa)). Residues 61-70 (HSRQSSTDSS) are compositionally biased toward polar residues. Residues S62 and S89 each carry the phosphoserine modification. The span at 91–110 (PASLQLGPGAGAAGSPAQQH) shows a compositional bias: low complexity. One can recognise a WW domain in the interval 124 to 157 (LPLPPGWEMTFTATGQRYFLNHIEKITTWQDPRK). A compositionally biased stretch (polar residues) spans 192 to 211 (NHQHQQQMAPTNLSQQNHPT). The tract at residues 192–216 (NHQHQQQMAPTNLSQQNHPTQNPPA) is disordered. The tract at residues 222 to 400 (PNALTTQQQQ…NKSEPFLTWL (179 aa)) is required for interaction with PALS1. 2 positions are modified to phosphoserine: S295 and S311. The PDZ-binding motif lies at 394–400 (EPFLTWL).

Binds to SLC9A3R2 via the PDZ motif at the plasma membrane. Binds to YWHAZ in vivo and in vitro through the phosphoserine-binding motif RSHSSP. Interacts (via coiled-coil domain) with SMAD2 (via MH1 domain), SMAD3 and SMAD4. Interacts with MED15. Interacts with PAX8 and NKX2-1. Interacts with TEAD1, TEAD2, TEAD3 and TEAD4. Interacts (via WW domain) with PALS1. Interacts with LATS1. Interacts with YAP1 (when phosphorylated at 'Ser-112'). Interacts (via WW domain) with PRRG4 (via cytoplasmic domain). Interacts (via WW domain) with AMOTL2 (via PPXY motif); the interaction promotes WWTR1/TAZ localization to the cytoplasm and tight junctions, thereby inhibiting its transcriptional coactivator properties. Interacts (via WW domain) with AMOT; the interaction facilitates translocation of WWTR1/TAZ to the cytoplasm. In terms of processing, phosphorylated by LATS2 and STK3/MST2. Phosphorylation by LATS2 results in creation of 14-3-3 binding sites, retention in the cytoplasm, and functional inactivation. Phosphorylation results in the inhibition of transcriptional coactivation through YWHAZ-mediated nuclear export. Post-translationally, ubiquitinated at Lys-46; leading to proteasomal degradation. Deubiquitinated and stabilized by UCHL1 at Lys-46; leading to inhibition of osteoclastogenesis.

The protein localises to the cytoplasm. The protein resides in the nucleus. It is found in the cell membrane. It localises to the cell junction. Its subcellular location is the tight junction. Its function is as follows. Transcriptional coactivator which acts as a downstream regulatory target in the Hippo signaling pathway that plays a pivotal role in organ size control and tumor suppression by restricting proliferation and promoting apoptosis. The core of this pathway is composed of a kinase cascade wherein STK3/MST2 and STK4/MST1, in complex with its regulatory protein SAV1, phosphorylates and activates LATS1/2 in complex with its regulatory protein MOB1, which in turn phosphorylates and inactivates YAP1 oncoprotein and WWTR1/TAZ. WWTR1 enhances PAX8 and NKX2-1/TTF1-dependent gene activation. In conjunction with YAP1, involved in the regulation of TGFB1-dependent SMAD2 and SMAD3 nuclear accumulation. Plays a key role in coupling SMADs to the transcriptional machinery such as the mediator complex. Regulates embryonic stem-cell self-renewal, promotes cell proliferation and epithelial-mesenchymal transition. This is WW domain-containing transcription regulator protein 1 from Canis lupus familiaris (Dog).